The following is a 127-amino-acid chain: Large ribosomal subunit protein bL17 (127 aa).

It belongs to the bacterial ribosomal protein bL17 family. In terms of assembly, part of the 50S ribosomal subunit. Contacts protein L32.

In Xanthomonas axonopodis pv. citri (strain 306), this protein is Large ribosomal subunit protein bL17.